Consider the following 396-residue polypeptide: S-adenosylmethionine synthase (396 aa).

ATP is bound at residue histidine 15. Aspartate 17 serves as a coordination point for Mg(2+). Glutamate 43 serves as a coordination point for K(+). L-methionine contacts are provided by glutamate 56 and glutamine 99. A flexible loop region spans residues glutamine 99–threonine 109. ATP is bound by residues aspartate 173–lysine 175, arginine 241–phenylalanine 242, aspartate 250, arginine 256–lysine 257, alanine 273, and lysine 277. Aspartate 250 lines the L-methionine pocket. Residue lysine 281 coordinates L-methionine.

This sequence belongs to the AdoMet synthase family. Homotetramer; dimer of dimers. It depends on Mg(2+) as a cofactor. The cofactor is K(+).

It localises to the cytoplasm. The catalysed reaction is L-methionine + ATP + H2O = S-adenosyl-L-methionine + phosphate + diphosphate. It functions in the pathway amino-acid biosynthesis; S-adenosyl-L-methionine biosynthesis; S-adenosyl-L-methionine from L-methionine: step 1/1. Its function is as follows. Catalyzes the formation of S-adenosylmethionine (AdoMet) from methionine and ATP. The overall synthetic reaction is composed of two sequential steps, AdoMet formation and the subsequent tripolyphosphate hydrolysis which occurs prior to release of AdoMet from the enzyme. This Nocardioides sp. (strain ATCC BAA-499 / JS614) protein is S-adenosylmethionine synthase.